Here is a 323-residue protein sequence, read N- to C-terminus: MADEHQFIENGLQRSQIDEFFADELGRAGYGGMDVAKTPMGTQIVLKAEKPGMVIGKGGKNIRKVTRELEDRFNLDDPQIDVQEVDEPDLNARIVADRLANALERGWYFRKAGHTTIDRIIESGALGAEIVLSGKVTGARSRVEKFNRGYIKHNGEPAQEIVDEGQGVAVMKLGTIGVTVKIIPPGAELPDDFEIHDDVDVEPVEQVAESDGVDSLLAEDPADIPDVGADDDVTVPQETPEEIIDEEVVEADPGVSSEDEEVVTEPVDIGGDDEDVEDIEVVSDDSGNDTETVAEEVEELDAEVEAEAEDLVAEMEDIDEEDV.

A KH type-2 domain is found at 17–86 (IDEFFADELG…DPQIDVQEVD (70 aa)). The disordered stretch occupies residues 251–303 (ADPGVSSEDEEVVTEPVDIGGDDEDVEDIEVVSDDSGNDTETVAEEVEELDAE). The segment covering 270–303 (GGDDEDVEDIEVVSDDSGNDTETVAEEVEELDAE) has biased composition (acidic residues).

The protein belongs to the universal ribosomal protein uS3 family. In terms of assembly, part of the 30S ribosomal subunit.

Binds the lower part of the 30S subunit head. This Haloquadratum walsbyi (strain DSM 16790 / HBSQ001) protein is Small ribosomal subunit protein uS3.